The primary structure comprises 85 residues: Large ribosomal subunit protein bL27 (85 aa).

Belongs to the bacterial ribosomal protein bL27 family.

This Pseudomonas fluorescens (strain ATCC BAA-477 / NRRL B-23932 / Pf-5) protein is Large ribosomal subunit protein bL27.